Reading from the N-terminus, the 379-residue chain is tRNA-specific 2-thiouridylase MnmA (379 aa).

ATP is bound by residues 23 to 30 and Leu-49; that span reads AMSGGVDS. Cys-117 (nucleophile) is an active-site residue. A disulfide bridge links Cys-117 with Cys-214. Gly-141 serves as a coordination point for ATP. Residues 163–165 form an interaction with tRNA region; it reads RDQ. Cys-214 serves as the catalytic Cysteine persulfide intermediate.

It belongs to the MnmA/TRMU family.

It localises to the cytoplasm. It carries out the reaction S-sulfanyl-L-cysteinyl-[protein] + uridine(34) in tRNA + AH2 + ATP = 2-thiouridine(34) in tRNA + L-cysteinyl-[protein] + A + AMP + diphosphate + H(+). Catalyzes the 2-thiolation of uridine at the wobble position (U34) of tRNA, leading to the formation of s(2)U34. The chain is tRNA-specific 2-thiouridylase MnmA from Cereibacter sphaeroides (strain ATCC 17023 / DSM 158 / JCM 6121 / CCUG 31486 / LMG 2827 / NBRC 12203 / NCIMB 8253 / ATH 2.4.1.) (Rhodobacter sphaeroides).